The sequence spans 639 residues: Chaperone protein HtpG (639 aa).

The tract at residues 1 to 347 (MSHQETHGFQ…SNDLPLNVSR (347 aa)) is a; substrate-binding. The interval 348–564 (EILQDNKITT…AGEMSSQMIK (217 aa)) is b. Positions 565-639 (LMQAAGQAVT…MNKMLLASVK (75 aa)) are c.

The protein belongs to the heat shock protein 90 family. In terms of assembly, homodimer.

Its subcellular location is the cytoplasm. Its function is as follows. Molecular chaperone. Has ATPase activity. This Shewanella loihica (strain ATCC BAA-1088 / PV-4) protein is Chaperone protein HtpG.